We begin with the raw amino-acid sequence, 186 residues long: Adenylyl-sulfate kinase (186 aa).

ATP is bound at residue 17 to 24; sequence GLSGAGKT. Ser-91 functions as the Phosphoserine intermediate in the catalytic mechanism.

Belongs to the APS kinase family.

The catalysed reaction is adenosine 5'-phosphosulfate + ATP = 3'-phosphoadenylyl sulfate + ADP + H(+). Its pathway is sulfur metabolism; hydrogen sulfide biosynthesis; sulfite from sulfate: step 2/3. Catalyzes the synthesis of activated sulfate. The sequence is that of Adenylyl-sulfate kinase from Chloroflexus aurantiacus (strain ATCC 29364 / DSM 637 / Y-400-fl).